Here is a 31-residue protein sequence, read N- to C-terminus: Photosystem II reaction center protein T (31 aa).

At Met-1 the chain carries N-formylmethionine. Residues 3–23 (SVAYILVLTMALAVLFFAIAF) form a helical membrane-spanning segment.

The protein belongs to the PsbT family. PSII is composed of 1 copy each of membrane proteins PsbA, PsbB, PsbC, PsbD, PsbE, PsbF, PsbH, PsbI, PsbJ, PsbK, PsbL, PsbM, PsbT, PsbX, PsbY, PsbZ, Psb30/Ycf12, peripheral proteins PsbO, CyanoQ (PsbQ), PsbU, PsbV and a large number of cofactors. It forms dimeric complexes.

It localises to the cellular thylakoid membrane. Functionally, found at the monomer-monomer interface of the photosystem II (PS II) dimer, plays a role in assembly and dimerization of PSII. PSII is a light-driven water plastoquinone oxidoreductase, using light energy to abstract electrons from H(2)O, generating a proton gradient subsequently used for ATP formation. This chain is Photosystem II reaction center protein T, found in Synechocystis sp. (strain ATCC 27184 / PCC 6803 / Kazusa).